Reading from the N-terminus, the 258-residue chain is MYHGALAQHLDIAQLVWYAQWLVIWTVVLLYLRREDRREGYPLVEPLGLVKLAPEDGQVYELPYPKTFVLPHGGTVTVPRRRPETRELKLAQTDGFEGAPLQPTGNPLVDAVGPASYAERAEVVDATVDGKAKIVPLRVATDFSIAEGDVDPRGLPVVAADGVEAGTVTDLWVDRSEHYFRYLELSVAGSARTALIPLGFCDVKKDKIVVTSILSEQFANVPRLQSRDQITLREEDKVSAYYAGGLLYATPERAESLL.

An N-formylmethionine modification is found at methionine 1. Residues 1-11 are Periplasmic-facing; it reads MYHGALAQHLD. Residues 12-30 form a helical membrane-spanning segment; the sequence is IAQLVWYAQWLVIWTVVLL. Residues 31 to 258 are Cytoplasmic-facing; it reads YLRREDRREG…ATPERAESLL (228 aa).

It belongs to the reaction center PuhA family. In terms of assembly, heterotrimer composed of subunits L, M, and H. It depends on a bacteriochlorophyll as a cofactor. The cofactor is a bacteriopheophytin. Fe cation serves as cofactor. Mg(2+) is required as a cofactor. Requires a menaquinone as cofactor. It depends on a ubiquinone as a cofactor.

Its subcellular location is the cellular chromatophore membrane. Its function is as follows. The reaction center is a membrane-bound complex that mediates the initial photochemical event in the electron transfer process of photosynthesis. The chain is Reaction center protein H chain (puhA) from Blastochloris viridis (Rhodopseudomonas viridis).